The sequence spans 291 residues: T-cell leukemia homeobox protein 3 (291 aa).

Residues 1-56 (MEAPASAQTPHPHEPISFGIDQILNSPDQDSAPAPRGPDGASYLGGPPGGRPGATY) form a disordered region. The segment at residues 166-225 (RKKPRTSFSRVQICELEKRFHRQKYLASAERAALAKSLKMTDAQVKTWFQNRRTKWRRQT) is a DNA-binding region (homeobox).

It localises to the nucleus. In Homo sapiens (Human), this protein is T-cell leukemia homeobox protein 3 (TLX3).